The chain runs to 202 residues: Orotate phosphoribosyltransferase (202 aa).

113 to 121 (EDIITTGGS) is a 5-phospho-alpha-D-ribose 1-diphosphate binding site. Orotate is bound by residues Thr117 and Arg145.

It belongs to the purine/pyrimidine phosphoribosyltransferase family. PyrE subfamily. Homodimer. It depends on Mg(2+) as a cofactor.

The catalysed reaction is orotidine 5'-phosphate + diphosphate = orotate + 5-phospho-alpha-D-ribose 1-diphosphate. It functions in the pathway pyrimidine metabolism; UMP biosynthesis via de novo pathway; UMP from orotate: step 1/2. Its function is as follows. Catalyzes the transfer of a ribosyl phosphate group from 5-phosphoribose 1-diphosphate to orotate, leading to the formation of orotidine monophosphate (OMP). The sequence is that of Orotate phosphoribosyltransferase from Campylobacter lari (strain RM2100 / D67 / ATCC BAA-1060).